The sequence spans 206 residues: 7-methyl-GTP pyrophosphatase (206 aa).

Asp-82 acts as the Proton acceptor in catalysis.

This sequence belongs to the Maf family. YceF subfamily. It depends on a divalent metal cation as a cofactor.

Its subcellular location is the cytoplasm. It catalyses the reaction N(7)-methyl-GTP + H2O = N(7)-methyl-GMP + diphosphate + H(+). Functionally, nucleoside triphosphate pyrophosphatase that hydrolyzes 7-methyl-GTP (m(7)GTP). May have a dual role in cell division arrest and in preventing the incorporation of modified nucleotides into cellular nucleic acids. The sequence is that of 7-methyl-GTP pyrophosphatase from Shewanella denitrificans (strain OS217 / ATCC BAA-1090 / DSM 15013).